The following is a 409-amino-acid chain: Protein naked cuticle homolog 2-like (409 aa).

Gly-2 carries N-myristoyl glycine lipidation. The 36-residue stretch at 109 to 144 folds into the EF-hand domain; the sequence is AEDNRQEWVFTLYDFDNSGKVTKEDMSSLMHTIYDV. Ca(2+) is bound by residues Asp-122, Asp-124, Ser-126, Lys-128, and Asp-133. 4 disordered regions span residues 166-224, 243-315, 346-367, and 388-409; these read VTPE…YCVD, TSRF…RFPG, NHTH…IRSR, and RHEH…YHQT. Composition is skewed to basic and acidic residues over residues 171–185 and 193–224; these read AARR…RETS and VRSE…YCVD. A compositionally biased stretch (low complexity) spans 247–268; that stretch reads DSSSPDADQDPPSRSSHSQSRP. Positions 389–409 are enriched in basic residues; sequence HEHHHHHEHHHHHHYHHYHQT.

This sequence belongs to the NKD family.

The protein localises to the cell membrane. It localises to the cytoplasm. In terms of biological role, cell autonomous antagonist of both the canonical and non-canonical Wnt signaling pathways. This chain is Protein naked cuticle homolog 2-like (nkd2l), found in Danio rerio (Zebrafish).